The chain runs to 521 residues: Bifunctional purine biosynthesis protein PurH (521 aa).

An MGS-like domain is found at 1 to 145 (MIKQALISVS…KNHRDVTVVV (145 aa)).

This sequence belongs to the PurH family.

The enzyme catalyses (6R)-10-formyltetrahydrofolate + 5-amino-1-(5-phospho-beta-D-ribosyl)imidazole-4-carboxamide = 5-formamido-1-(5-phospho-D-ribosyl)imidazole-4-carboxamide + (6S)-5,6,7,8-tetrahydrofolate. It carries out the reaction IMP + H2O = 5-formamido-1-(5-phospho-D-ribosyl)imidazole-4-carboxamide. It participates in purine metabolism; IMP biosynthesis via de novo pathway; 5-formamido-1-(5-phospho-D-ribosyl)imidazole-4-carboxamide from 5-amino-1-(5-phospho-D-ribosyl)imidazole-4-carboxamide (10-formyl THF route): step 1/1. The protein operates within purine metabolism; IMP biosynthesis via de novo pathway; IMP from 5-formamido-1-(5-phospho-D-ribosyl)imidazole-4-carboxamide: step 1/1. The sequence is that of Bifunctional purine biosynthesis protein PurH from Burkholderia pseudomallei (strain 1106a).